The following is a 505-amino-acid chain: Mannosyl-oligosaccharide alpha-1,2-mannosidase 1B (505 aa).

Positions 1–16 (MRTLLALAALAGFAAA) are cleaved as a signal peptide. N-linked (GlcNAc...) asparagine glycans are attached at residues Asn-88 and Asn-174. A disulfide bridge connects residues Cys-325 and Cys-354. Residue Asn-359 is glycosylated (N-linked (GlcNAc...) asparagine). Catalysis depends on Glu-368, which acts as the Proton donor. Position 494 (Thr-494) interacts with Ca(2+).

This sequence belongs to the glycosyl hydrolase 47 family. In terms of assembly, monomer. Ca(2+) is required as a cofactor. It depends on Mg(2+) as a cofactor.

It is found in the cytoplasmic vesicle lumen. The enzyme catalyses N(4)-(alpha-D-Man-(1-&gt;2)-alpha-D-Man-(1-&gt;2)-alpha-D-Man-(1-&gt;3)-[alpha-D-Man-(1-&gt;2)-alpha-D-Man-(1-&gt;3)-[alpha-D-Man-(1-&gt;2)-alpha-D-Man-(1-&gt;6)]-alpha-D-Man-(1-&gt;6)]-beta-D-Man-(1-&gt;4)-beta-D-GlcNAc-(1-&gt;4)-beta-D-GlcNAc)-L-asparaginyl-[protein] (N-glucan mannose isomer 9A1,2,3B1,2,3) + 4 H2O = N(4)-(alpha-D-Man-(1-&gt;3)-[alpha-D-Man-(1-&gt;3)-[alpha-D-Man-(1-&gt;6)]-alpha-D-Man-(1-&gt;6)]-beta-D-Man-(1-&gt;4)-beta-D-GlcNAc-(1-&gt;4)-beta-D-GlcNAc)-L-asparaginyl-[protein] (N-glucan mannose isomer 5A1,2) + 4 beta-D-mannose. It catalyses the reaction N(4)-(alpha-D-Man-(1-&gt;2)-alpha-D-Man-(1-&gt;2)-alpha-D-Man-(1-&gt;3)-[alpha-D-Man-(1-&gt;3)-[alpha-D-Man-(1-&gt;2)-alpha-D-Man-(1-&gt;6)]-alpha-D-Man-(1-&gt;6)]-beta-D-Man-(1-&gt;4)-beta-D-GlcNAc-(1-&gt;4)-beta-D-GlcNAc)-L-asparaginyl-[protein] (N-glucan mannose isomer 8A1,2,3B1,3) + 3 H2O = N(4)-(alpha-D-Man-(1-&gt;3)-[alpha-D-Man-(1-&gt;3)-[alpha-D-Man-(1-&gt;6)]-alpha-D-Man-(1-&gt;6)]-beta-D-Man-(1-&gt;4)-beta-D-GlcNAc-(1-&gt;4)-beta-D-GlcNAc)-L-asparaginyl-[protein] (N-glucan mannose isomer 5A1,2) + 3 beta-D-mannose. Its pathway is protein modification; protein glycosylation. Its function is as follows. Involved in the maturation of Asn-linked oligosaccharides. Progressively trims alpha-1,2-linked mannose residues from Man(9)GlcNAc(2) to produce Man(5)GlcNAc(2). The chain is Mannosyl-oligosaccharide alpha-1,2-mannosidase 1B (mns1B) from Emericella nidulans (strain FGSC A4 / ATCC 38163 / CBS 112.46 / NRRL 194 / M139) (Aspergillus nidulans).